We begin with the raw amino-acid sequence, 34 residues long: MEVNILGLIATALFIIIPTSFLLILYVKTASQQN.

A helical membrane pass occupies residues 5–25 (ILGLIATALFIIIPTSFLLIL).

Belongs to the PsbM family. PSII is composed of 1 copy each of membrane proteins PsbA, PsbB, PsbC, PsbD, PsbE, PsbF, PsbH, PsbI, PsbJ, PsbK, PsbL, PsbM, PsbT, PsbX, PsbY, PsbZ, Psb30/Ycf12, at least 3 peripheral proteins of the oxygen-evolving complex and a large number of cofactors. It forms dimeric complexes.

The protein localises to the plastid. Its subcellular location is the chloroplast thylakoid membrane. In terms of biological role, one of the components of the core complex of photosystem II (PSII). PSII is a light-driven water:plastoquinone oxidoreductase that uses light energy to abstract electrons from H(2)O, generating O(2) and a proton gradient subsequently used for ATP formation. It consists of a core antenna complex that captures photons, and an electron transfer chain that converts photonic excitation into a charge separation. This subunit is found at the monomer-monomer interface. This Nephroselmis olivacea (Green alga) protein is Photosystem II reaction center protein M.